Consider the following 121-residue polypeptide: Histone H2B.6 (121 aa).

A disordered region spans residues 1–28 (MAPKAEKKPKVEKRVPGKEGETSKKKAK). N6-acetyllysine is present on residues Lys7 and Lys13.

Belongs to the histone H2B family. In terms of assembly, the nucleosome is a histone octamer containing two molecules each of H2A, H2B, H3 and H4 assembled in one H3-H4 heterotetramer and two H2A-H2B heterodimers. The octamer wraps approximately 147 bp of DNA. Can be acetylated to form H2BK6ac and H2BK33ac. Expressed preferentially in meristematic tissues.

It is found in the nucleus. The protein localises to the chromosome. Functionally, core component of nucleosome. Nucleosomes wrap and compact DNA into chromatin, limiting DNA accessibility to the cellular machineries which require DNA as a template. Histones thereby play a central role in transcription regulation, DNA repair, DNA replication and chromosomal stability. DNA accessibility is regulated via a complex set of post-translational modifications of histones, also called histone code, and nucleosome remodeling. This is Histone H2B.6 (TH123) from Triticum aestivum (Wheat).